Here is a 360-residue protein sequence, read N- to C-terminus: Arginase, non-hepatic 2 (360 aa).

His122, Asp145, His147, and Asp149 together coordinate Mn(2+). Residues His147–Asn151, Ser158–Asn160, and Asp204 each bind substrate. Residues Asp253 and Asp255 each contribute to the Mn(2+) site. 2 residues coordinate substrate: Thr267 and Glu298.

This sequence belongs to the arginase family. In terms of assembly, homotrimer. Mn(2+) is required as a cofactor. Expressed at differing tadpole stages in tail, intestine, hindlimb and trunk region. Strongest in tadpole tail.

The enzyme catalyses L-arginine + H2O = urea + L-ornithine. Its pathway is nitrogen metabolism; urea cycle; L-ornithine and urea from L-arginine: step 1/1. Its function is as follows. As well as its role in the urea cycle, may be involved in tissue remodeling. The sequence is that of Arginase, non-hepatic 2 (arg2-b) from Xenopus laevis (African clawed frog).